We begin with the raw amino-acid sequence, 566 residues long: OTU domain-containing protein 5 (566 aa).

Disordered stretches follow at residues 1-117 (MTIL…GDAL) and 145-175 (GPGH…GAGY). A compositionally biased stretch (pro residues) spans 11 to 30 (PPDADPANEPPPPGPLPPAP). Over residues 34 to 47 (AGVGVGGGGTGVGG) the composition is skewed to gly residues. A compositionally biased stretch (pro residues) spans 63-75 (ASPPPQGPLPGPP). Serine 64 carries the phosphoserine modification. A compositionally biased stretch (low complexity) spans 84 to 97 (AVPPGAVAGPRPQQ). Residues 105 to 115 (GPGGPGGGPGD) are compositionally biased toward gly residues. Position 165 is a phosphoserine (serine 165). Tyrosine 175 is subject to Phosphotyrosine. At serine 177 the chain carries Phosphoserine. Threonine 195 is modified (phosphothreonine). An OTU domain is found at 213-336 (FIIKQMKEDG…NIHYNSVVNP (124 aa)). The cys-loop stretch occupies residues 218 to 224 (MKEDGAC). The active site involves aspartate 221. The active-site Nucleophile is the cysteine 224. Residues 273–283 (KRKNNCHGNHI) form a variable-loop region. The residue at position 323 (serine 323) is a Phosphoserine. The segment at 324–329 (YHRNIH) is his-loop. Histidine 329 is a catalytic residue. Serine 332 and serine 370 each carry phosphoserine. The interval 413 to 499 (ARQVRGPSQP…TSSQFSAGGD (87 aa)) is disordered. 2 stretches are compositionally biased toward low complexity: residues 425 to 438 (ASAT…AASS) and 445 to 457 (SRSP…ASSP). Serine 447 carries the phosphoserine modification. Threonine 502 bears the Phosphothreonine mark. Phosphoserine is present on serine 503.

Belongs to the peptidase C85 family. Interacts with TRAF3. Post-translationally, phosphorylation at Ser-177 is required for deubiquitinating activity. Phosphorylation at Ser-323, Ser-332 and Ser-503 by MTOR promotes its activity.

Its subcellular location is the nucleus. The catalysed reaction is Thiol-dependent hydrolysis of ester, thioester, amide, peptide and isopeptide bonds formed by the C-terminal Gly of ubiquitin (a 76-residue protein attached to proteins as an intracellular targeting signal).. Its activity is regulated as follows. Inhibited by N-ethyl-maleimide (NEM). Functionally, deubiquitinating enzyme that functions as a negative regulator of the innate immune system. Has peptidase activity towards 'Lys-48'- and 'Lys-63'-linked polyubiquitin chains. Can also cleave 'Lys-11'-linked ubiquitin chains (in vitro). Acts via TRAF3 deubiquitination and subsequent suppression of type I interferon (IFN) production. Controls neuroectodermal differentiation through cleaving 'Lys-48'-linked ubiquitin chains to counteract degradation of select chromatin regulators such as ARID1A, HDAC2 and HCF1. Acts as a positive regulator of mTORC1 and mTORC2 signaling following phosphorylation by MTOR: acts by mediating deubiquitination of BTRC, leading to its stability. The polypeptide is OTU domain-containing protein 5 (Mus musculus (Mouse)).